Consider the following 314-residue polypeptide: Quinolinate synthase (314 aa).

Iminosuccinate contacts are provided by H27 and S44. C89 contacts [4Fe-4S] cluster. Iminosuccinate is bound by residues 115–117 and S132; that span reads YIN. C175 is a [4Fe-4S] cluster binding site. Residues 201–203 and T218 each bind iminosuccinate; that span reads HPE. Residue C271 coordinates [4Fe-4S] cluster.

It belongs to the quinolinate synthase family. Type 2 subfamily. The cofactor is [4Fe-4S] cluster.

The protein resides in the cytoplasm. It carries out the reaction iminosuccinate + dihydroxyacetone phosphate = quinolinate + phosphate + 2 H2O + H(+). It participates in cofactor biosynthesis; NAD(+) biosynthesis; quinolinate from iminoaspartate: step 1/1. Catalyzes the condensation of iminoaspartate with dihydroxyacetone phosphate to form quinolinate. In Ehrlichia chaffeensis (strain ATCC CRL-10679 / Arkansas), this protein is Quinolinate synthase.